Consider the following 51-residue polypeptide: Large ribosomal subunit protein eL39 (51 aa).

The protein belongs to the eukaryotic ribosomal protein eL39 family.

This chain is Large ribosomal subunit protein eL39 (rpl39e), found in Thermoplasma acidophilum (strain ATCC 25905 / DSM 1728 / JCM 9062 / NBRC 15155 / AMRC-C165).